Consider the following 152-residue polypeptide: Protein-export protein SecB (152 aa).

Belongs to the SecB family. Homotetramer, a dimer of dimers. One homotetramer interacts with 1 SecA dimer.

The protein localises to the cytoplasm. Functionally, one of the proteins required for the normal export of preproteins out of the cell cytoplasm. It is a molecular chaperone that binds to a subset of precursor proteins, maintaining them in a translocation-competent state. It also specifically binds to its receptor SecA. This chain is Protein-export protein SecB, found in Rickettsia typhi (strain ATCC VR-144 / Wilmington).